The primary structure comprises 144 residues: Deoxyuridine 5'-triphosphate nucleotidohydrolase (144 aa).

Residues Ser-66, Gly-79, Asp-82, Tyr-85, Lys-90, Arg-134, Phe-139, and Gly-140 each contribute to the dUMP site.

The protein belongs to the dUTPase family. Homotrimer. Requires Mg(2+) as cofactor.

The catalysed reaction is dUTP + H2O = dUMP + diphosphate + H(+). Its pathway is pyrimidine metabolism; dUMP biosynthesis; dUMP from dCTP (dUTP route): step 2/2. Involved in nucleotide metabolism via production of dUMP, the immediate precursor of thymidine nucleotides, and decreases the intracellular concentration of dUTP so that uracil cannot be incorporated into DNA. The polypeptide is Deoxyuridine 5'-triphosphate nucleotidohydrolase (DUT1) (Candida glabrata (strain ATCC 2001 / BCRC 20586 / JCM 3761 / NBRC 0622 / NRRL Y-65 / CBS 138) (Yeast)).